A 502-amino-acid chain; its full sequence is Ubiquitin-associated protein 1 (502 aa).

Residues 1–95 (MASKKLGADF…AEAKVNSKSG (95 aa)) are interaction with ESCRT-I. The UMA domain occupies 17–63 (LDDVPFKTGDKFKTPAKVGLPIGFSLPDCLQVVREVQYDFSLEKKTI). Residues 86–100 (AEAKVNSKSGPEGDS) show a composition bias toward basic and acidic residues. Residues 86 to 117 (AEAKVNSKSGPEGDSKMSFSKTHSTATMPPPI) form a disordered region. A compositionally biased stretch (polar residues) spans 102–112 (MSFSKTHSTAT). A phosphoserine mark is found at Ser-146, Ser-205, and Ser-289. Residues 260-290 (VSNIKSLSFPKLDSDDSNQKTAKLASTFHST) are interaction with PTPN23. 2 consecutive UBA domains span residues 389 to 430 (SPSE…LFAH) and 451 to 498 (QCSE…LMAR).

Component of an ESCRT-I complex (endosomal sorting complex required for transport I) which consists of TSG101, VPS28, VPS37A and UBAP1 in a 1:1:1:1 stoichiometry. Interacts with PTPN23. Interacts (via UBA domains) with ubiquitinated proteins. As to expression, ubiquitous. Highly expressed in heart, brain, placenta, lung, liver, skeletal muscle and pancreas.

The protein localises to the cytoplasm. The protein resides in the cytosol. Its subcellular location is the endosome. In terms of biological role, component of the ESCRT-I complex, a regulator of vesicular trafficking process. Binds to ubiquitinated cargo proteins and is required for the sorting of endocytic ubiquitinated cargos into multivesicular bodies (MVBs). Plays a role in the proteasomal degradation of ubiquitinated cell-surface proteins, such as EGFR and BST2. In Homo sapiens (Human), this protein is Ubiquitin-associated protein 1.